The chain runs to 296 residues: 4-diphosphocytidyl-2-C-methyl-D-erythritol kinase (296 aa).

Residue Lys-19 is part of the active site. 102–112 is an ATP binding site; the sequence is PMGAGLGGGSS. Residue Asp-144 is part of the active site.

The protein belongs to the GHMP kinase family. IspE subfamily.

The enzyme catalyses 4-CDP-2-C-methyl-D-erythritol + ATP = 4-CDP-2-C-methyl-D-erythritol 2-phosphate + ADP + H(+). It functions in the pathway isoprenoid biosynthesis; isopentenyl diphosphate biosynthesis via DXP pathway; isopentenyl diphosphate from 1-deoxy-D-xylulose 5-phosphate: step 3/6. Functionally, catalyzes the phosphorylation of the position 2 hydroxy group of 4-diphosphocytidyl-2C-methyl-D-erythritol. In Burkholderia pseudomallei (strain 1710b), this protein is 4-diphosphocytidyl-2-C-methyl-D-erythritol kinase.